The chain runs to 1000 residues: Isoleucine--tRNA ligase, mitochondrial (1000 aa).

A mitochondrion-targeting transit peptide spans 1-27 (MLGAWRAAPRLRLRARFGVASVWARSA). The 'HIGH' region signature appears at 102–112 (PYANGDPHVGH). Residues Lys-649 and Lys-652 each coordinate ATP. Positions 649–653 (KMSKS) match the 'KMSKS' region motif.

Belongs to the class-I aminoacyl-tRNA synthetase family.

Its subcellular location is the mitochondrion matrix. It catalyses the reaction tRNA(Ile) + L-isoleucine + ATP = L-isoleucyl-tRNA(Ile) + AMP + diphosphate. Aminoacyl-tRNA synthetase that catalyzes the specific attachment of isoleucine to its cognate tRNA (tRNA(Ile)). The polypeptide is Isoleucine--tRNA ligase, mitochondrial (IARS2) (Gallus gallus (Chicken)).